We begin with the raw amino-acid sequence, 87 residues long: ParB-like nuclease domain-containing protein YnaK (87 aa).

This Escherichia coli (strain K12) protein is ParB-like nuclease domain-containing protein YnaK (ynaK).